Consider the following 836-residue polypeptide: Granulocyte colony-stimulating factor receptor (836 aa).

An N-terminal signal peptide occupies residues 1-24 (MARLGNCSLTWAALIILLLPGSLE). In terms of domain architecture, Ig-like C2-type spans 25–117 (ECGHISVSAP…SLQILDQVEL (93 aa)). The Extracellular portion of the chain corresponds to 25-627 (ECGHISVSAP…TLTPEGSELH (603 aa)). Cystine bridges form between C26–C52 and C46–C101. N-linked (GlcNAc...) asparagine glycosylation is found at N51, N93, N128, and N134. Fibronectin type-III domains lie at 125–230 (IPHN…LEPP), 233–332 (RTMD…TTER), 334–430 (PTVR…SRGP), 431–528 (ALTR…MAPS), and 530–623 (APEL…TPEG). Disulfide bonds link C131/C142, C167/C218, C177/C186, C248/C295, and C266/C309. A WSXWS motif motif is present at residues 318-322 (WSDWS). N389, N474, N579, and N610 each carry an N-linked (GlcNAc...) asparagine glycan. A helical membrane pass occupies residues 628-650 (IILGLFGLLLLLTCLCGTAWLCC). The Cytoplasmic portion of the chain corresponds to 651-836 (SPNRKNPLWP…VHGMEALGSF (186 aa)). The Box 1 motif signature appears at 658–666 (LWPSVPDPA).

Belongs to the type I cytokine receptor family. Type 2 subfamily. In terms of assembly, homodimer. The dimeric receptor binds two CSF3 molecules. Interacts with CEACAM1; down-regulates the CSF3R-STAT3 pathway through recruitment of PTPN6 that dephosphorylates CSF3R. Post-translationally, N-glycosylated. As to expression, one or several isoforms have been found in myelogenous leukemia cell line KG-1, leukemia U-937 cell line, in bone marrow cells, placenta, and peripheral blood granulocytes. Isoform GCSFR-2 is found only in leukemia U-937 cells. Isoform GCSFR-3 is highly expressed in placenta.

The protein localises to the secreted. The protein resides in the cell membrane. Receptor for granulocyte colony-stimulating factor (CSF3), essential for granulocytic maturation. Plays a crucial role in the proliferation, differentiation and survival of cells along the neutrophilic lineage. In addition it may function in some adhesion or recognition events at the cell surface. This Homo sapiens (Human) protein is Granulocyte colony-stimulating factor receptor (CSF3R).